The following is a 365-amino-acid chain: Ribosomal RNA large subunit methyltransferase F (365 aa).

Residues 1–50 (MSKPAVKSVPSATAKTATRAANPRQKAKAPKQAKPEGKGRAKPSKDKPRA) form a disordered region. The span at 33–50 (AKPEGKGRAKPSKDKPRA) shows a compositional bias: basic and acidic residues.

The protein belongs to the methyltransferase superfamily. METTL16/RlmF family.

It localises to the cytoplasm. The enzyme catalyses adenosine(1618) in 23S rRNA + S-adenosyl-L-methionine = N(6)-methyladenosine(1618) in 23S rRNA + S-adenosyl-L-homocysteine + H(+). Specifically methylates the adenine in position 1618 of 23S rRNA. The protein is Ribosomal RNA large subunit methyltransferase F of Shewanella baltica (strain OS195).